Here is a 139-residue protein sequence, read N- to C-terminus: Lysozyme (139 aa).

The first 19 residues, 1 to 19, serve as a signal peptide directing secretion; it reads MTKYVILLAVLAFALHCDA. The region spanning 20-139 is the C-type lysozyme domain; that stretch reads KRFTRCGLVQ…QHGLPDISDC (120 aa). 4 disulfide bridges follow: Cys-25/Cys-139, Cys-46/Cys-129, Cys-81/Cys-95, and Cys-91/Cys-109. Catalysis depends on residues Glu-51 and Asp-69.

Belongs to the glycosyl hydrolase 22 family.

It catalyses the reaction Hydrolysis of (1-&gt;4)-beta-linkages between N-acetylmuramic acid and N-acetyl-D-glucosamine residues in a peptidoglycan and between N-acetyl-D-glucosamine residues in chitodextrins.. Functionally, lysozymes have primarily a bacteriolytic function; those in tissues and body fluids are associated with the monocyte-macrophage system and enhance the activity of immunoagents. This is Lysozyme from Hyalophora cecropia (Cecropia moth).